We begin with the raw amino-acid sequence, 191 residues long: MITITEAAQNHFVKLLSSQPEGTQIRVFVANPGKPTAECGVSYCPADSVESADTHLKFNLFSVFVDPISAPYLNEAAIDFVTDELGSQLTLKAPNAKVRKVADDAPLIERVDYVLQSQINPQLANHGGRVTLMEITDDAFAVLQFGGGCNGCSMVDVTLKEGIEKELLQQFPELKGVKDLTEHQRGEHSFY.

[4Fe-4S] cluster is bound by residues cysteine 149 and cysteine 152.

It belongs to the NfuA family. As to quaternary structure, homodimer. [4Fe-4S] cluster serves as cofactor.

Functionally, involved in iron-sulfur cluster biogenesis. Binds a 4Fe-4S cluster, can transfer this cluster to apoproteins, and thereby intervenes in the maturation of Fe/S proteins. Could also act as a scaffold/chaperone for damaged Fe/S proteins. This is Fe/S biogenesis protein NfuA from Hamiltonella defensa subsp. Acyrthosiphon pisum (strain 5AT).